The sequence spans 416 residues: Probable glucan 1,3-beta-glucosidase A (416 aa).

Residues 1-22 (MFVESAKKALLALSLLAASAQA) form the signal peptide. Asparagine 183 carries an N-linked (GlcNAc...) asparagine glycan. Glutamate 210 serves as the catalytic Proton donor. Intrachain disulfides connect cysteine 290–cysteine 415 and cysteine 316–cysteine 342. Glutamate 308 functions as the Nucleophile in the catalytic mechanism.

It belongs to the glycosyl hydrolase 5 (cellulase A) family. Monomer. It depends on Mn(2+) as a cofactor.

The protein resides in the secreted. The enzyme catalyses Successive hydrolysis of beta-D-glucose units from the non-reducing ends of (1-&gt;3)-beta-D-glucans, releasing alpha-glucose.. In terms of biological role, beta-glucanases participate in the metabolism of beta-glucan, the main structural component of the cell wall. It could also function biosynthetically as a transglycosylase. This Aspergillus niger (strain ATCC MYA-4892 / CBS 513.88 / FGSC A1513) protein is Probable glucan 1,3-beta-glucosidase A (exgA).